Consider the following 393-residue polypeptide: High mobility group protein DSP1 (393 aa).

The disordered stretch occupies residues 153-179 (QMQQQQQQQNVINSASPMSRVKADAKP). 2 consecutive DNA-binding regions (HMG box) follow at residues 179–249 (PRGR…QNYV) and 271–339 (PKRS…TEYK). Over residues 364–374 (LLAAAAQQQHQ) the composition is skewed to low complexity. Residues 364–393 (LLAAAAQQQHQQLEEQHDDDDGDGDDDENQ) are disordered. Positions 379–393 (QHDDDDGDGDDDENQ) are enriched in acidic residues.

It belongs to the HMGB family.

The protein resides in the nucleus. It is found in the chromosome. Its function is as follows. Binds preferentially single-stranded DNA and unwinds double-stranded DNA. In Drosophila melanogaster (Fruit fly), this protein is High mobility group protein DSP1 (Dsp1).